Here is a 466-residue protein sequence, read N- to C-terminus: Catalase ifgD (466 aa).

Positions 1–22 (MAPNYAKKCPVMGKAPSSGHSS) are disordered. Histidine 48 is an active-site residue. Tyrosine 337 serves as a coordination point for heme.

The protein belongs to the catalase family. Requires heme as cofactor.

Its pathway is alkaloid biosynthesis; ergot alkaloid biosynthesis. In terms of biological role, catalase; part of the gene cluster that mediates the biosynthesis of isofumigaclavines, fungal ergot alkaloids. The tryptophan dimethylallyltransferase ifgA catalyzes the first step of ergot alkaloid biosynthesis by condensing dimethylallyl diphosphate (DMAP) and tryptophan to form 4-dimethylallyl-L-tryptophan. The second step is catalyzed by the methyltransferase ifgB that methylates 4-dimethylallyl-L-tryptophan in the presence of S-adenosyl-L-methionine, resulting in the formation of N-methyl-dimethylallyl-L-tryptophan. The catalase ifgD and the FAD-dependent oxidoreductase ifgC then transform N-methyl-dimethylallyl-L-tryptophan to chanoclavine-I which is further oxidized by ifgE in the presence of NAD(+), resulting in the formation of chanoclavine-I aldehyde. The chanoclavine-I aldehyde reductases ifgG and/or fgaOx3 reduce chanoclavine-I aldehyde to dihydrochanoclavine-I aldehyde that spontaneously dehydrates to form 6,8-dimethyl-6,7-didehydroergoline. The festuclavine dehydrogenases ifgF1 and/or ifgF2 then catalyze the reduction of 6,8-dimethyl-6,7-didehydroergoline to form festuclavine. Hydrolysis of festuclavine by a yet undetermined cytochrome P450 monooxygenase (called ifgH) then leads to the formation of isofumigaclavine B which is in turn acetylated by ifgI to isofumigaclavine A. Penicillium roqueforti has interestingly at least two sets of genes for the consumption of chanoclavine-I aldehyde on three different loci, the OYEs ifgG/fgaOx3 and the festuclavine synthase homologs ifgF1/ifgF2. The reason for the duplication of these genes is unclear, probably to ensure the conversion of chanoclavine-I aldehyde by differential gene expression under various environmental conditions. This is Catalase ifgD from Penicillium roqueforti (strain FM164).